Reading from the N-terminus, the 443-residue chain is 3-phosphoshikimate 1-carboxyvinyltransferase (443 aa).

The disordered stretch occupies residues 1 to 25 (MSHSAEPLPMTARRSGPLTGEAQVP). Residues Lys28, Ser29, and Arg33 each coordinate 3-phosphoshikimate. Residue Lys28 coordinates phosphoenolpyruvate. The phosphoenolpyruvate site is built by Gly101 and Arg129. Positions 174, 176, 326, and 353 each coordinate 3-phosphoshikimate. Residue Gln176 coordinates phosphoenolpyruvate. Asp326 (proton acceptor) is an active-site residue. Arg357 and Arg400 together coordinate phosphoenolpyruvate.

It belongs to the EPSP synthase family. In terms of assembly, monomer.

Its subcellular location is the cytoplasm. The enzyme catalyses 3-phosphoshikimate + phosphoenolpyruvate = 5-O-(1-carboxyvinyl)-3-phosphoshikimate + phosphate. It participates in metabolic intermediate biosynthesis; chorismate biosynthesis; chorismate from D-erythrose 4-phosphate and phosphoenolpyruvate: step 6/7. Its function is as follows. Catalyzes the transfer of the enolpyruvyl moiety of phosphoenolpyruvate (PEP) to the 5-hydroxyl of shikimate-3-phosphate (S3P) to produce enolpyruvyl shikimate-3-phosphate and inorganic phosphate. This is 3-phosphoshikimate 1-carboxyvinyltransferase from Paracoccus denitrificans (strain Pd 1222).